A 388-amino-acid chain; its full sequence is Cdc42 effector protein 1 (388 aa).

The interval 1 to 28 is disordered; the sequence is MPGPQGGTGAPSMSLGKLSPVGWVPSSH. Phosphoserine occurs at positions 19 and 27. A Phosphothreonine modification is found at Thr-34. Residues 38–52 enclose the CRIB domain; sequence ISPPLGDFRHTMHVG. At Ser-39 the chain carries Phosphoserine. Arg-53 is subject to Omega-N-methylarginine. Residues Ser-65, Ser-77, Ser-101, Ser-113, Ser-121, and Ser-139 each carry the phosphoserine modification. Residues 165 to 206 form a disordered region; that stretch reads RLPRVEKHSSRDRDHDRDPDHSQDREQSSSPSEPNPNPELRR. A compositionally biased stretch (basic and acidic residues) spans 167-191; the sequence is PRVEKHSSRDRDHDRDPDHSQDREQ. Ser-193, Ser-207, Ser-209, and Ser-212 each carry phosphoserine. A run of 2 repeats spans residues 237 to 243 and 250 to 256. The disordered stretch occupies residues 237–257; that stretch reads PAANPPAPAANPAPTAKPPAD. Positions 237–270 are 2 X 7 AA tandem repeats of [PT]-[AT]-A-[ENT]-[PT]-[PTS]-[AG]; the sequence is PAANPPAPAANPAPTAKPPADAVTTLDTVTSLPA. The segment covering 239–253 has biased composition (pro residues); that stretch reads ANPPAPAANPAPTAK. Phosphoserine occurs at positions 298, 318, 347, and 350.

Belongs to the BORG/CEP family. As to quaternary structure, interacts with RHOQ and CDC42, in a GTP-dependent manner.

Its subcellular location is the endomembrane system. It is found in the cytoplasm. The protein localises to the cytoskeleton. Functionally, probably involved in the organization of the actin cytoskeleton. Induced membrane extensions in fibroblasts. This chain is Cdc42 effector protein 1, found in Rattus norvegicus (Rat).